We begin with the raw amino-acid sequence, 725 residues long: Homeobox-leucine zipper protein HDG3 (725 aa).

The segment at 1–74 is disordered; that stretch reads MSQSNMVPVA…PRHKKKKYNR (74 aa). The segment covering 11-40 has biased composition (low complexity); that stretch reads NNGDNNNDNENNNNNNNNGGTDNTNAGNDS. Over residues 46–64 the composition is skewed to polar residues; that stretch reads DSGNTSSGNHGEGLGNNQA. Positions 65–74 are enriched in basic residues; that stretch reads PRHKKKKYNR. Residues 68–127 constitute a DNA-binding region (homeobox); that stretch reads KKKKYNRHTQLQISEMEAFFRECPHPDDKQRYDLSAQLGLDPVQIKFWFQNKRTQNKNQQ. A coiled-coil region spans residues 117–201; it reads QNKRTQNKNQ…SVTAEKISRL (85 aa). The region spanning 243–475 is the START domain; sequence DANTKPIIME…LVRQCERISS (233 aa).

Belongs to the HD-ZIP homeobox family. Class IV subfamily. In terms of assembly, interacts with AIL7/PLT7, ANT, BBM and AIL1. As to expression, expressed in siliques.

Its subcellular location is the nucleus. In terms of biological role, probable transcription factor. Seems to promote cell differentiation. The protein is Homeobox-leucine zipper protein HDG3 of Arabidopsis thaliana (Mouse-ear cress).